The chain runs to 332 residues: MAQVWKDAEISLDPIKDQTVAVIGYGIQGDAQANNMKDSGLKVVVGLKEGGSSWKKAASDGHRVLTVAEACKEADIIHVLVPDMIQAQLYRDEMGPNISKGKALSFSHAAAIHWKWIEAPSDVDVIMVAPKGPGSKVRETYLEGFGTPSIVAVEQDSTGGAWDRTLGLGKAIGSARAGLIKTTFKEEVETDWFGEQADLCGGSATMVVSAFETLVEAGYQPEIAYFEVLHELKLIVDMIQKYGINGMWRRVSETARYGGLTRGPMVMDSHTKERMGKVLKEIQDGTFNEEWVSSYRKDGRDAFDKYMKELDSHQIEQVGRKMRKMMWPDSTE.

The region spanning 1-182 (MAQVWKDAEI…GSARAGLIKT (182 aa)) is the KARI N-terminal Rossmann domain. Residues 25 to 28 (YGIQ), Lys-48, Ser-53, and 83 to 86 (DMIQ) contribute to the NADP(+) site. His-108 is an active-site residue. Gly-134 contributes to the NADP(+) binding site. The 147-residue stretch at 183-329 (TFKEEVETDW…RKMRKMMWPD (147 aa)) folds into the KARI C-terminal knotted domain. Mg(2+) contacts are provided by Asp-191, Glu-195, Glu-227, and Glu-231. Ser-252 serves as a coordination point for substrate.

This sequence belongs to the ketol-acid reductoisomerase family. Requires Mg(2+) as cofactor.

The catalysed reaction is (2R)-2,3-dihydroxy-3-methylbutanoate + NADP(+) = (2S)-2-acetolactate + NADPH + H(+). The enzyme catalyses (2R,3R)-2,3-dihydroxy-3-methylpentanoate + NADP(+) = (S)-2-ethyl-2-hydroxy-3-oxobutanoate + NADPH + H(+). The protein operates within amino-acid biosynthesis; L-isoleucine biosynthesis; L-isoleucine from 2-oxobutanoate: step 2/4. Its pathway is amino-acid biosynthesis; L-valine biosynthesis; L-valine from pyruvate: step 2/4. Its function is as follows. Involved in the biosynthesis of branched-chain amino acids (BCAA). Catalyzes an alkyl-migration followed by a ketol-acid reduction of (S)-2-acetolactate (S2AL) to yield (R)-2,3-dihydroxy-isovalerate. In the isomerase reaction, S2AL is rearranged via a Mg-dependent methyl migration to produce 3-hydroxy-3-methyl-2-ketobutyrate (HMKB). In the reductase reaction, this 2-ketoacid undergoes a metal-dependent reduction by NADPH to yield (R)-2,3-dihydroxy-isovalerate. The chain is Ketol-acid reductoisomerase (NADP(+)) from Cenarchaeum symbiosum (strain A).